Consider the following 178-residue polypeptide: Conodipine-P2 (178 aa).

The N-terminal stretch at 1 to 24 (MKLLAPVLWAMAALGVTWLVAVDS) is a signal peptide. Residues Pro38, Pro42, and Pro49 each carry the 4-hydroxyproline modification. His54 is an active-site residue. A propeptide spans 98-130 (KREVTSHRATSIAHSRLWKTALDQKSFLNRKAR) (interchain peptide). A Pyrrolidone carboxylic acid modification is found at Gln131. At Pro137 the chain carries 4-hydroxyproline.

Belongs to the phospholipase A2 family. Group IX subfamily. Heterodimer of an alpha and a beta chain; probably disulfide-linked. Ca(2+) serves as cofactor. As to expression, expressed by the venom duct.

The protein localises to the secreted. The catalysed reaction is a 1,2-diacyl-sn-glycero-3-phosphocholine + H2O = a 1-acyl-sn-glycero-3-phosphocholine + a fatty acid + H(+). Catalyzes the calcium-dependent hydrolysis of the 2-acyl groups in 3-sn-phosphoglycerides. The polypeptide is Conodipine-P2 (Conus purpurascens (Purple cone)).